A 584-amino-acid polypeptide reads, in one-letter code: UvrABC system protein C (584 aa).

Residues 12-89 enclose the GIY-YIG domain; sequence NKPGCYLFFN…IKKYHPKYNV (78 aa). The 36-residue stretch at 194–229 folds into the UVR domain; that stretch reads NQVKQTLVKQMQKASDNLQFEQAQRIKDQITSLDFI.

The protein belongs to the UvrC family. Interacts with UvrB in an incision complex.

It localises to the cytoplasm. Functionally, the UvrABC repair system catalyzes the recognition and processing of DNA lesions. UvrC both incises the 5' and 3' sides of the lesion. The N-terminal half is responsible for the 3' incision and the C-terminal half is responsible for the 5' incision. The polypeptide is UvrABC system protein C (Mycoplasma mycoides subsp. mycoides SC (strain CCUG 32753 / NCTC 10114 / PG1)).